The primary structure comprises 342 residues: Oxygen-dependent coproporphyrinogen-III oxidase (342 aa).

S98 contacts substrate. A divalent metal cation is bound by residues H102 and H112. H112 acts as the Proton donor in catalysis. Residue 114 to 116 participates in substrate binding; it reads NYR. A divalent metal cation-binding residues include H146 and H176. The tract at residues 266-301 is important for dimerization; it reads YVEFNLVWDRGTIFGLQTNGRTESILMSLPPLARWE.

It belongs to the aerobic coproporphyrinogen-III oxidase family. In terms of assembly, homodimer. The cofactor is a divalent metal cation.

It localises to the cytoplasm. The catalysed reaction is coproporphyrinogen III + O2 + 2 H(+) = protoporphyrinogen IX + 2 CO2 + 2 H2O. It functions in the pathway porphyrin-containing compound metabolism; protoporphyrin-IX biosynthesis; protoporphyrinogen-IX from coproporphyrinogen-III (O2 route): step 1/1. In terms of biological role, involved in the heme and chlorophyll biosynthesis. Catalyzes the aerobic oxidative decarboxylation of propionate groups of rings A and B of coproporphyrinogen-III to yield the vinyl groups in protoporphyrinogen-IX. The protein is Oxygen-dependent coproporphyrinogen-III oxidase of Prochlorococcus marinus (strain MIT 9301).